A 252-amino-acid chain; its full sequence is Triosephosphate isomerase (252 aa).

Substrate is bound at residue 9 to 11 (NWK). Histidine 96 acts as the Electrophile in catalysis. The active-site Proton acceptor is the glutamate 166. Substrate contacts are provided by residues glycine 172, serine 212, and 233-234 (GG).

It belongs to the triosephosphate isomerase family. Homodimer.

The protein localises to the cytoplasm. The catalysed reaction is D-glyceraldehyde 3-phosphate = dihydroxyacetone phosphate. It participates in carbohydrate biosynthesis; gluconeogenesis. Its pathway is carbohydrate degradation; glycolysis; D-glyceraldehyde 3-phosphate from glycerone phosphate: step 1/1. Its function is as follows. Involved in the gluconeogenesis. Catalyzes stereospecifically the conversion of dihydroxyacetone phosphate (DHAP) to D-glyceraldehyde-3-phosphate (G3P). In Chlorobium chlorochromatii (strain CaD3), this protein is Triosephosphate isomerase.